A 149-amino-acid chain; its full sequence is Ribonuclease HI (149 aa).

One can recognise an RNase H type-1 domain in the interval 1–142; the sequence is MTPKVTIYTD…ADALANEGLR (142 aa). Mg(2+)-binding residues include Asp-10, Glu-48, Asp-70, and Asp-134.

The protein belongs to the RNase H family. As to quaternary structure, monomer. The cofactor is Mg(2+).

It localises to the cytoplasm. It catalyses the reaction Endonucleolytic cleavage to 5'-phosphomonoester.. Functionally, endonuclease that specifically degrades the RNA of RNA-DNA hybrids. The chain is Ribonuclease HI from Caulobacter vibrioides (strain ATCC 19089 / CIP 103742 / CB 15) (Caulobacter crescentus).